The sequence spans 482 residues: Probable polyamine transporter At1g31820 (482 aa).

Transmembrane regions (helical) follow at residues 36–56 (VSMLPLVFLIFYEVSGGPFGA), 66–86 (LLALLGFVIFPFIWCIPEALI), 94–114 (FPINGGFVVWVSSALGTFWGF), 143–163 (VPALATGLPRVASILILTLLL), 171–191 (LTIVGWTAVFMGVFSMLPFAV), 254–274 (VIFVALSNFLPLLSGTGAIPL), 294–314 (GWLQLWVQAAAATSNMGMFLA), 344–364 (TPLLGILFSASGVLLLSGLSF), 367–387 (IIAAENLLYCGGMILEFIAFV), 406–426 (TVGSILICVPPIVLICLVIVL), and 429–449 (IKVALVSFVMVVIGFLMKPCL).

Belongs to the amino acid-polyamine-organocation (APC) superfamily. Polyamine:cation symporter (PHS) (TC 2.A.3.12) family.

It is found in the cell membrane. In terms of biological role, probable cell membrane polyamine/proton symporter involved in the polyamine uptake in cells. The chain is Probable polyamine transporter At1g31820 from Arabidopsis thaliana (Mouse-ear cress).